The following is a 695-amino-acid chain: IQ domain-containing protein E (695 aa).

Residues 29 to 55 (KAKRKAFHKPPPTSPKSPYLSKPRKVA) form a disordered region. Coiled-coil stretches lie at residues 157 to 264 (LHVQ…RLQT), 292 to 358 (SALL…SSKS), and 387 to 477 (NKDH…CPEV). At S322 the chain carries Phosphoserine. 4 disordered regions span residues 357-390 (KSHA…NKDH), 465-521 (EMKK…RRDA), 564-599 (ASKA…TGSP), and 618-695 (RARH…NFPV). Over residues 465–482 (EMKKEEKEDCPEVPHKAQ) the composition is skewed to basic and acidic residues. 2 IQ domains span residues 542–571 (LDEA…HGSE) and 601–630 (QEEA…RTTT).

As to quaternary structure, component of the EvC complex composed of EFCAB7, IQCE, EVC2 and EVC; built from two subcomplexes, EVC2:EVC and EFCAB7:IQCE. Interacts (via N-terminus) with EFCAB7 (via EF-hands 1 and 2); this interaction anchors the EVC-EVC2 complex in a signaling microdomain at the base of cilia and stimulates the Hedgehog (Hh) pathway. Interacts with EVC2 (via N-terminal end). Interacts with EVC.

It localises to the cell projection. It is found in the cilium membrane. Component of the EvC complex that positively regulates ciliary Hedgehog (Hh) signaling. Required for proper limb morphogenesis. The sequence is that of IQ domain-containing protein E (IQCE) from Homo sapiens (Human).